A 196-amino-acid chain; its full sequence is Transmembrane protein 126A (196 aa).

The Mitochondrial matrix segment spans residues 1-34 (MENHKSNNTKENITIVDISRKINQLPEAERNLLE). A helical membrane pass occupies residues 35–55 (HGSVYVGLNAALCGLIANSLF). Residues 56-57 (RR) are Mitochondrial intermembrane-facing. Residues 58-78 (ILNVTKARIAAGLPMAWIPFL) form a helical membrane-spanning segment. The Mitochondrial matrix portion of the chain corresponds to 79 to 107 (TTDITYRCFVSFPLNTGDLDCETCTITRS). Residues 108–128 (GLIGLVIGGLYPVFLAIPVNG) traverse the membrane as a helical segment. The Mitochondrial intermembrane portion of the chain corresponds to 129-159 (GLAARYQSALLPHKGNILSYWIRTSKPVFRK). Residues 160–176 (MLFPIMLQTMFSAYLGS) form a helical membrane-spanning segment. The Mitochondrial matrix segment spans residues 177 to 196 (EQYKLLIKALQLSEPGKEIH).

Belongs to the TMEM126 family. In terms of assembly, interacts with OXA1L; promoting cotranslational quality control in mitochondria.

It is found in the mitochondrion inner membrane. Functionally, protein required for the cotranslational protein quality control in the inner membrane of the mitochondria. Associates with newly synthesized polypeptides and may act as a chaperone that cooperates with OXA1L for the insertion of newly synthesized mitochondrial proteins into the inner membrane. Required for the assembly of the ND4 module of mitochondrial complex I. In Pongo abelii (Sumatran orangutan), this protein is Transmembrane protein 126A (TMEM126A).